The sequence spans 275 residues: Ribosomal RNA small subunit methyltransferase A (275 aa).

Asn-21, Leu-23, Gly-48, Glu-69, Asp-94, and Asn-115 together coordinate S-adenosyl-L-methionine.

It belongs to the class I-like SAM-binding methyltransferase superfamily. rRNA adenine N(6)-methyltransferase family. RsmA subfamily.

Its subcellular location is the cytoplasm. The enzyme catalyses adenosine(1518)/adenosine(1519) in 16S rRNA + 4 S-adenosyl-L-methionine = N(6)-dimethyladenosine(1518)/N(6)-dimethyladenosine(1519) in 16S rRNA + 4 S-adenosyl-L-homocysteine + 4 H(+). In terms of biological role, specifically dimethylates two adjacent adenosines (A1518 and A1519) in the loop of a conserved hairpin near the 3'-end of 16S rRNA in the 30S particle. May play a critical role in biogenesis of 30S subunits. In Clostridium botulinum (strain Langeland / NCTC 10281 / Type F), this protein is Ribosomal RNA small subunit methyltransferase A.